Here is a 325-residue protein sequence, read N- to C-terminus: RepFIB replication protein A (325 aa).

The interval 279 to 298 (APNDESKENPLQPSPAEKVS) is disordered.

Belongs to the initiator RepB protein family.

This protein is essential for plasmid replication; it is involved in copy control functions. In vitro, binds to the DNA repeat units, BCDD'D'', EFG and HIJ. This Escherichia coli protein is RepFIB replication protein A (repA).